Consider the following 78-residue polypeptide: Protein SlyX homolog (78 aa).

Belongs to the SlyX family.

The protein is Protein SlyX homolog of Xylella fastidiosa (strain 9a5c).